Here is a 338-residue protein sequence, read N- to C-terminus: Protein FosB (338 aa).

4 disordered regions span residues 1-54 (MFQA…PGSF), 79-191 (MAQS…DQLE), 222-276 (CKIP…PPNL), and 316-338 (GAQRTSGSDQPSDPLNSPSLLAL). Polar residues-rich tracts occupy residues 13–31 (SRCSSSPSAESQYLSSVDS) and 79–88 (MAQSQGQPLA). Serine 27 is subject to Phosphoserine. The span at 113–124 (SSGGASGSGGPS) shows a compositional bias: gly residues. Residues 125 to 137 (TSGTTSGPGPARP) show a composition bias toward low complexity. One can recognise a bZIP domain in the interval 155–218 (EEKRRVRRER…ERLEFVLVAH (64 aa)). Residues 157-182 (KRRVRRERNKLAAAKCRNRRRELTDR) form a basic motif region. Residues 183-211 (LQAETDQLEEEKAELESEIAELQKEKERL) form a leucine-zipper region. The segment covering 256–265 (LPPPPPPPLP) has biased composition (pro residues). Polar residues-rich tracts occupy residues 266–276 (FQTSQDAPPNL) and 318–338 (QRTSGSDQPSDPLNSPSLLAL).

The protein belongs to the bZIP family. Fos subfamily. As to quaternary structure, heterodimer; binds to DNA as heterodimer. Component of an AP-1 transcription factor complex; composed of FOS-JUN heterodimers. As part of the AP-1 transcription factor complex, forms heterodimers with JUN, JUNB or JUND, thereby binding to the AP-1 consensus sequence and stimulating transcription. Interacts with the BAF multiprotein chromatin-remodeling complex subunits SMARCB1 and SMARCD1. Interacts with ARID1A and JUN. In terms of assembly, homodimer under oxidizing conditions and monomer under reducing conditions (in vitro). Heterodimer; binds to DNA as heterodimer. Forms heterodimers with JUNB, JUN or JUND; thereby binding to the AP-1 consensus sequence but does not stimulate transcription. Forms heterodimers with JUND under oxidizing conditions. In terms of processing, phosphorylated. Phosphorylated at Ser-27 by CSNK2A1; phosphorylation increases protein stability and transactivation potential. Expressed in the nucleus accumbens of the striatum (at protein level).

The protein localises to the nucleus. Its function is as follows. Heterodimerizes with proteins of the JUN family to form an AP-1 transcription factor complex, thereby enhancing their DNA binding activity to gene promoters containing an AP-1 consensus sequence 5'-TGA[GC]TCA-3' and enhancing their transcriptional activity. As part of the AP-1 complex, facilitates enhancer selection together with cell-type-specific transcription factors by collaboratively binding to nucleosomal enhancers and recruiting the SWI/SNF (BAF) chromatin remodeling complex to establish accessible chromatin. Together with JUN, plays a role in activation-induced cell death of T cells by binding to the AP-1 promoter site of FASLG/CD95L, and inducing its transcription in response to activation of the TCR/CD3 signaling pathway. Exhibits transactivation activity in vitro. Involved in the display of nurturing behavior towards newborns. May play a role in neurogenesis in the hippocampus and in learning and memory-related tasks by regulating the expression of various genes involved in neurogenesis, depression and epilepsy. Implicated in behavioral responses related to morphine reward and spatial memory. Functionally, exhibits lower transactivation activity than isoform 1 in vitro. The heterodimer with JUN does not display any transcriptional activity, and may thereby act as an transcriptional inhibitor. May be involved in the regulation of neurogenesis in the hippocampus. May play a role in synaptic modifications in nucleus accumbens medium spiny neurons and thereby play a role in adaptive and pathological reward-dependent learning, including maladaptive responses involved in drug addiction. Seems to be more stably expressed with a half-life of ~9.5 hours in cell culture as compared to 1.5 hours half-life of isoform 1. This is Protein FosB (FOSB) from Homo sapiens (Human).